The chain runs to 556 residues: Adenine deaminase (556 aa).

The protein belongs to the metallo-dependent hydrolases superfamily. Adenine deaminase family. Mn(2+) serves as cofactor.

The catalysed reaction is adenine + H2O + H(+) = hypoxanthine + NH4(+). This chain is Adenine deaminase, found in Methanocaldococcus jannaschii (strain ATCC 43067 / DSM 2661 / JAL-1 / JCM 10045 / NBRC 100440) (Methanococcus jannaschii).